Here is a 65-residue protein sequence, read N- to C-terminus: Potassium channel toxin kappa-KTx 2.6 (65 aa).

The N-terminal stretch at 1-27 (MKTSKMICAFLLVLVVGTFNDISGAYG) is a signal peptide. A propeptide spanning residues 28-39 (EYVEDQHSFKIE) is cleaved from the precursor. Cystine bridges form between cysteine 45/cysteine 63 and cysteine 49/cysteine 59.

Belongs to the short scorpion toxin superfamily. Potassium channel inhibitor kappa-KTx family. Kappa-KTx 2 subfamily. As to expression, expressed by the venom gland.

It localises to the secreted. Functionally, potassium channel inhibitor (Kv). This is Potassium channel toxin kappa-KTx 2.6 from Opisthacanthus cayaporum (South American scorpion).